A 415-amino-acid polypeptide reads, in one-letter code: Transcriptional regulator fogI (415 aa).

A DNA-binding region (zn(2)-C6 fungal-type) is located at residues cysteine 12–cysteine 39. Positions aspartate 50 to proline 153 are disordered. Low complexity-rich tracts occupy residues valine 80–threonine 102 and glutamine 123–proline 135.

It is found in the nucleus. Functionally, transcriptional regulator that postively regulates the expression of the gene cluster that mediates the biosynthesis of flavoglaucin and congeners (including aspergin, dihydroauroglaucin and auroglaucin), prenylated salicylaldehyde derivatives carrying a saturated or an unsaturated C-7 side chain. This Aspergillus ruber (strain CBS 135680) protein is Transcriptional regulator fogI.